The chain runs to 1203 residues: Delphilin (1203 aa).

The region spanning 1–79 (MPATNQGWPE…VPPSLGVLPG (79 aa)) is the PDZ 1 domain. The S-palmitoyl cysteine moiety is linked to residue Ala3. The interval 215–270 (GAQRLRRSRSEERPERLLVSTRASAAPRRPDEPPPRKATSLLGGRTGPGGPRRTVR) is disordered. Residues 231–241 (LLVSTRASAAP) are compositionally biased toward low complexity. Residues 268–345 (TVRVYKGNKS…MPTLVVEEGP (78 aa)) enclose the PDZ 2 domain. Ser303 carries the post-translational modification Phosphoserine. Disordered stretches follow at residues 466–541 (ESSL…TPNP), 563–586 (IGTMSKSRASPPVPSLVGTSGPRT), 611–656 (LASP…PPSR), and 710–821 (SFVT…SHMS). Positions 500–509 (RSQGLETSLS) are enriched in polar residues. 4 positions are modified to phosphoserine: Ser572, Ser613, Ser644, and Ser647. Positions 611-625 (LASPSSSESHPYASL) are enriched in low complexity. Over residues 715–740 (ERSSASECVSSSEEGSSLTYSSISDH) the composition is skewed to low complexity. Residues 741–756 (IPPPPLSPPPPPPLPF) are compositionally biased toward pro residues. Over residues 774 to 784 (QSLTKPLTQIN) the composition is skewed to polar residues. Residues 786–803 (PVPPPPPPPLPPPVPCAP) are compositionally biased toward pro residues. Residues 812 to 1203 (HRRSETSHMS…SSGMVSPLAW (392 aa)) enclose the FH2 domain.

In terms of assembly, interacts with C-terminus of the glutamate receptor GRID2 via PDZ domain. Isoform 2 also interacts with Profilin-2/PFN2 and with the monocarboxylate transporter SLC16A7 via PDZ domain. The interaction of isoform 2 with GRID2 is dependent on GRID2 phosphorylation by PKA. Isoform 2 is palmitoylated. Palmitoylation of isoform 2 is necessary for the enhanced cell surface expression of GRID2, and is also responsible for the accumulation of isoform 2 within dendritic spines. Isoform 1 and isoform 2 are differentially localized, probably modulating GRID2 signaling in neurons. Isoform 1 is expressed in the cerebellum, but not in the cerebral cortex. Isoform 2 is expressed in the cell body of purkinge cells of the cerebellum and weakly expressed in the cerebrum and the brainstem as well as various nuclei of the thalamus. Isoform 2 is highly expressed in the cerebral cortex than in the cerebellum. Isoform 3 is expressed in the cerebellum and cerebrum.

The protein resides in the postsynaptic cell membrane. Its subcellular location is the cell projection. It localises to the dendritic spine. It is found in the synapse. The protein localises to the cell membrane. Its function is as follows. Postsynaptic scaffolding protein at the Purkinje cell synapse, where it may serve to link GRID2 with actin cytoskeleton and various signaling molecules. This is Delphilin (Grid2ip) from Mus musculus (Mouse).